Reading from the N-terminus, the 406-residue chain is DNA primase DnaG (406 aa).

Residues 167–253 (DAVVIVEGRA…CVEDLSRRTV (87 aa)) enclose the Toprim domain. E173, D215, and D217 together coordinate Mg(2+). Residues 259 to 309 (NKTPASAAAPIATTQSETAATDGSATPAPTPEPAPDTAPSPDSDGDDTEAA) are disordered. A compositionally biased stretch (low complexity) spans 261–272 (TPASAAAPIATT). Residues 286 to 296 (APTPEPAPDTA) show a composition bias toward pro residues.

Belongs to the archaeal DnaG primase family. In terms of assembly, forms a ternary complex with MCM helicase and DNA. Requires Mg(2+) as cofactor.

It catalyses the reaction ssDNA + n NTP = ssDNA/pppN(pN)n-1 hybrid + (n-1) diphosphate.. Its function is as follows. RNA polymerase that catalyzes the synthesis of short RNA molecules used as primers for DNA polymerase during DNA replication. This Halobacterium salinarum (strain ATCC 29341 / DSM 671 / R1) protein is DNA primase DnaG.